The primary structure comprises 337 residues: Vegetative-specific protein H5 (337 aa).

Positions 88-90 (HGG) match the Involved in the stabilization of the negatively charged intermediate by the formation of the oxyanion hole motif. Active-site residues include Ser-161, Asp-261, and His-291.

It belongs to the 'GDXG' lipolytic enzyme family.

In Dictyostelium discoideum (Social amoeba), this protein is Vegetative-specific protein H5 (cinB).